The primary structure comprises 178 residues: MTQMTSSDVPGMGRRQFMNLLTFGSVTGVALGSLYPVVKYFIPPRASGSGGGTSAKDELGNSVTASGWLANHSDGDRSLVQGLKGDPTYLIVEGDDAIGSYGINAICTHLGCVVPWNSGVNKFVCPCHGSQYNSTGKVVRGPAPLSLALANIAVENDNVFVSQWTETDFRTGEKPWWT.

The helical transmembrane segment at 20-42 (LLTFGSVTGVALGSLYPVVKYFI) threads the bilayer. One can recognise a Rieske domain in the interval 68–161 (WLANHSDGDR…IAVENDNVFV (94 aa)). Cys107, His109, Cys125, and His128 together coordinate [2Fe-2S] cluster. Cys112 and Cys127 are disulfide-bonded.

Belongs to the Rieske iron-sulfur protein family. The 4 large subunits of the cytochrome b6-f complex are cytochrome b6, subunit IV (17 kDa polypeptide, PetD), cytochrome f and the Rieske protein, while the 4 small subunits are PetG, PetL, PetM and PetN. The complex functions as a dimer. [2Fe-2S] cluster is required as a cofactor.

Its subcellular location is the cellular thylakoid membrane. The enzyme catalyses 2 oxidized [plastocyanin] + a plastoquinol + 2 H(+)(in) = 2 reduced [plastocyanin] + a plastoquinone + 4 H(+)(out). Its function is as follows. Component of the cytochrome b6-f complex, which mediates electron transfer between photosystem II (PSII) and photosystem I (PSI), cyclic electron flow around PSI, and state transitions. The chain is Cytochrome b6-f complex iron-sulfur subunit from Prochlorococcus marinus (strain MIT 9303).